The primary structure comprises 651 residues: Receptor-like serine/threonine-protein kinase At4g25390 (651 aa).

Positions 1–25 are cleaved as a signal peptide; that stretch reads MPSRSISAPVPVLAPAPIVSSLVPA. At 26–40 the chain is on the extracellular side; that stretch reads APSGHQNKTTRIFPP. The N-linked (GlcNAc...) asparagine glycan is linked to Asn32. A helical membrane pass occupies residues 41–61; sequence FVVAGAGAGFSLFITLSVCFC. Residues 62–651 are Cytoplasmic-facing; it reads KFSRKRSSPP…PLKTTRKQRR (590 aa). The interval 66 to 87 is disordered; the sequence is KRSSPPAENASSSPRRPSPREF. A compositionally biased stretch (low complexity) spans 69–87; the sequence is SPPAENASSSPRRPSPREF. The 535-residue stretch at 99–633 folds into the Protein kinase domain; that stretch reads FSQANRLGQG…LKGEVNLPEL (535 aa). Residues 105–113 and Lys127 each bind ATP; that span reads LGQGGFGVV. Asp225 functions as the Proton acceptor in the catalytic mechanism.

The protein belongs to the protein kinase superfamily. Ser/Thr protein kinase family.

Its subcellular location is the cell membrane. The enzyme catalyses L-seryl-[protein] + ATP = O-phospho-L-seryl-[protein] + ADP + H(+). It carries out the reaction L-threonyl-[protein] + ATP = O-phospho-L-threonyl-[protein] + ADP + H(+). The protein is Receptor-like serine/threonine-protein kinase At4g25390 of Arabidopsis thaliana (Mouse-ear cress).